The sequence spans 433 residues: Gamma-glutamyl phosphate reductase (433 aa).

Belongs to the gamma-glutamyl phosphate reductase family.

The protein localises to the cytoplasm. The enzyme catalyses L-glutamate 5-semialdehyde + phosphate + NADP(+) = L-glutamyl 5-phosphate + NADPH + H(+). The protein operates within amino-acid biosynthesis; L-proline biosynthesis; L-glutamate 5-semialdehyde from L-glutamate: step 2/2. Functionally, catalyzes the NADPH-dependent reduction of L-glutamate 5-phosphate into L-glutamate 5-semialdehyde and phosphate. The product spontaneously undergoes cyclization to form 1-pyrroline-5-carboxylate. This chain is Gamma-glutamyl phosphate reductase, found in Psychrobacter cryohalolentis (strain ATCC BAA-1226 / DSM 17306 / VKM B-2378 / K5).